The sequence spans 170 residues: Lipoprotein signal peptidase (170 aa).

5 helical membrane-spanning segments follow: residues 13-33, 72-92, 96-113, 116-136, and 142-162; these read IFIS…VTYV, LFFL…SLKE, VSRF…GNII, LFRP…IFGL, and FNFA…YDLF. Residues Asp-124 and Asp-146 contribute to the active site.

Belongs to the peptidase A8 family.

The protein resides in the cell inner membrane. It catalyses the reaction Release of signal peptides from bacterial membrane prolipoproteins. Hydrolyzes -Xaa-Yaa-Zaa-|-(S,diacylglyceryl)Cys-, in which Xaa is hydrophobic (preferably Leu), and Yaa (Ala or Ser) and Zaa (Gly or Ala) have small, neutral side chains.. The protein operates within protein modification; lipoprotein biosynthesis (signal peptide cleavage). Functionally, this protein specifically catalyzes the removal of signal peptides from prolipoproteins. The polypeptide is Lipoprotein signal peptidase (Borrelia duttonii (strain Ly)).